The following is a 434-amino-acid chain: Cysteine proteinase 6 (434 aa).

Positions 1 to 19 are cleaved as a signal peptide; sequence MKVLSALCVLLVSVATAKQ. Positions 20-113 are cleaved as a propeptide — activation peptide; that stretch reads QLSELQYRNA…SEKVFGGVQA (94 aa). Intrachain disulfides connect C133–C178 and C169–C211. C136 is a catalytic residue. N-linked (GlcNAc...) asparagine glycosylation occurs at N227. An intrachain disulfide couples C269 to C416. The active site involves H276. Residues 285–384 are disordered; sequence SGSSGSQSQS…GGNSNSGDYP (100 aa). Positions 288 to 347 are enriched in low complexity; the sequence is SGSQSQSAGSQSQSSNNNWSESSQSQDSNSWSQSSQSQSSQDSNSWSQSSQSQGSNSFTG. N305 is a glycosylation site (N-linked (GlcNAc...) asparagine). Positions 348-358 are enriched in gly residues; sequence AGTGSGSGSVS. Positions 359-381 are enriched in low complexity; it reads GSGSASGSSSFSGSSNGGNSNSG. Residue N394 is part of the active site.

Belongs to the peptidase C1 family.

It localises to the lysosome. In Dictyostelium discoideum (Social amoeba), this protein is Cysteine proteinase 6 (cprF).